Consider the following 417-residue polypeptide: Imidazolonepropionase (417 aa).

Fe(3+)-binding residues include His77 and His79. Zn(2+) is bound by residues His77 and His79. 3 residues coordinate 4-imidazolone-5-propanoate: Arg86, Tyr149, and His182. Tyr149 contacts N-formimidoyl-L-glutamate. His247 contacts Fe(3+). His247 is a Zn(2+) binding site. Residue Gln250 participates in 4-imidazolone-5-propanoate binding. Asp322 serves as a coordination point for Fe(3+). Asp322 contributes to the Zn(2+) binding site. N-formimidoyl-L-glutamate is bound by residues Asn324 and Gly326. Thr327 serves as a coordination point for 4-imidazolone-5-propanoate.

Belongs to the metallo-dependent hydrolases superfamily. HutI family. Zn(2+) is required as a cofactor. The cofactor is Fe(3+).

The protein resides in the cytoplasm. It catalyses the reaction 4-imidazolone-5-propanoate + H2O = N-formimidoyl-L-glutamate. It functions in the pathway amino-acid degradation; L-histidine degradation into L-glutamate; N-formimidoyl-L-glutamate from L-histidine: step 3/3. Functionally, catalyzes the hydrolytic cleavage of the carbon-nitrogen bond in imidazolone-5-propanoate to yield N-formimidoyl-L-glutamate. It is the third step in the universal histidine degradation pathway. This Cupriavidus necator (strain ATCC 17699 / DSM 428 / KCTC 22496 / NCIMB 10442 / H16 / Stanier 337) (Ralstonia eutropha) protein is Imidazolonepropionase.